A 298-amino-acid chain; its full sequence is Exosome complex component Rrp4 (298 aa).

Positions 63–131 constitute an S1 motif domain; sequence GDVVIGKIKD…EVKKVKLGLK (69 aa). Residues 139-197 form the KH domain; the sequence is RGGIIVDITPTKVPRLIGKKGSMINMIKDKTNCKIIVGQNGLVWVKGEEDMEQLTKDII. The disordered stretch occupies residues 276 to 298; sequence KNKKDKPLSYGNNSGNSYILNNR. Over residues 285 to 298 the composition is skewed to polar residues; it reads YGNNSGNSYILNNR.

Belongs to the RRP4 family. As to quaternary structure, component of the archaeal exosome complex. Forms a trimer of Rrp4 and/or Csl4 subunits. The trimer associates with a hexameric ring-like arrangement composed of 3 Rrp41-Rrp42 heterodimers.

It is found in the cytoplasm. Functionally, non-catalytic component of the exosome, which is a complex involved in RNA degradation. Increases the RNA binding and the efficiency of RNA degradation. Confers strong poly(A) specificity to the exosome. The polypeptide is Exosome complex component Rrp4 (Methanobrevibacter smithii (strain ATCC 35061 / DSM 861 / OCM 144 / PS)).